A 327-amino-acid chain; its full sequence is Arabinose 5-phosphate isomerase KpsF (327 aa).

Residues 48 to 191 (VLNLIMNCKG…AIAMIHQRKF (144 aa)) enclose the SIS domain. Residue 63–68 (GMGKSG) participates in ATP binding. Substrate is bound by residues 82-83 (GT), H89, H95, 121-130 (KLVPSLKNFG), and 155-157 (HMA). H89 is a Zn(2+) binding site. CBS domains follow at residues 217–273 (MQHD…EGSL) and 282–327 (MTRE…RIFD).

As to quaternary structure, homotetramer.

It catalyses the reaction D-arabinose 5-phosphate = D-ribulose 5-phosphate. Inhibited by 10 uM zinc, cadmium or mercury ions. In terms of biological role, involved in the biosynthesis of K-antigen capsules. Catalyzes the reversible aldol-ketol isomerization between D-ribulose 5-phosphate (Ru5P) and D-arabinose 5-phosphate (A5P). This chain is Arabinose 5-phosphate isomerase KpsF, found in Escherichia coli O6:H1 (strain CFT073 / ATCC 700928 / UPEC).